The primary structure comprises 184 residues: MIPRLKELYYKEIQPQLKETLGYKNTYMGPKVEKVVINMGLGLDGADAKIMKSTEEDLGKITGQKPTVTKFKKSVANFKTRKGTNAGLKVTLRGNKMYEFLDRLVNIALPRIKDFRGLSPKGFDKFGNYTFGIKEHIIFPEVNFDRIDKIRGLDIVVVISALNKDHSFALLEKLNFPFIKKGDN.

The protein belongs to the universal ribosomal protein uL5 family. As to quaternary structure, part of the 50S ribosomal subunit; part of the 5S rRNA/L5/L18/L25 subcomplex. Contacts the 5S rRNA and the P site tRNA. Forms a bridge to the 30S subunit in the 70S ribosome.

Functionally, this is one of the proteins that bind and probably mediate the attachment of the 5S RNA into the large ribosomal subunit, where it forms part of the central protuberance. In the 70S ribosome it contacts protein S13 of the 30S subunit (bridge B1b), connecting the 2 subunits; this bridge is implicated in subunit movement. Contacts the P site tRNA; the 5S rRNA and some of its associated proteins might help stabilize positioning of ribosome-bound tRNAs. The sequence is that of Large ribosomal subunit protein uL5 from Pelagibacter ubique (strain HTCC1062).